The chain runs to 815 residues: RNA-binding protein 5 (815 aa).

The segment at 1–93 (MGSDKRVSRT…EHDYRHDISD (93 aa)) is disordered. 5 positions are modified to phosphoserine: serine 18, serine 59, serine 69, serine 72, and serine 78. In terms of domain architecture, RRM 1 spans 98-178 (KTIMLRGLPI…KHIAMHYSNP (81 aa)). The RanBP2-type zinc finger occupies 181–210 (KFEDWLCNKCCLNNFRKRLKCFRCGADKFD). In terms of domain architecture, RRM 2 spans 231–315 (DTIILRNIAP…KTIGVDFAKS (85 aa)). A required for interaction with U2AF2 region spans residues 321–809 (VLSDGNRVSA…KDAVRKAMFA (489 aa)). The segment covering 411 to 422 (QSPQLYNQTSNP) has biased composition (polar residues). Disordered regions lie at residues 411–468 (QSPQ…DESS) and 507–540 (PAAE…AQQI). A compositionally biased stretch (low complexity) spans 426–446 (PTEEAQPSTSTSTQAPAASPT). At serine 444 the chain carries Phosphoserine. The sufficient for interaction with ACIN1, PRPF8, SFRS3, SNRPB, SNRPN, SNRNP70 and SNRNP200 stretch occupies residues 452 to 535 (TKYAVPDTST…KEKKEKPKSK (84 aa)). A phosphoserine mark is found at serine 621 and serine 624. The C2H2-type; atypical zinc-finger motif lies at 647–677 (MACLLCRRQFPNKDALVRHQQLSDLHKQNMD). One can recognise a G-patch domain in the interval 743-789 (HSNIGNKMLQAMGWREGSGLGRKCQGITAPIEAQVRLKGAGLGAKGS).

The protein belongs to the RBM5/RBM10 family. Component of the spliceosome A complex (also known as the prespliceosome). Appears to dissociate from the spliceosome upon formation of the spliceosome B complex (also known as the precatalytic spliceosome), in which the heterotrimeric U4/U6.U5 snRNPs are bound. Interacts with U2AF2; this interaction is direct. Also interacts with ACIN1, PRPF8, SFRS3, SNRPB, SNRPN, SNRNP70 and SNRNP200; these interactions may be indirect. As to expression, isoform 5 is widely expressed in normal tissues and is expressed at increased levels in T-leukemic cell lines.

The protein localises to the nucleus. Its function is as follows. Component of the spliceosome A complex. Binds to ssRNA containing the consensus sequence 5'-AGGUAA-3'. Regulates alternative splicing of a number of mRNAs. May modulate splice site pairing after recruitment of the U1 and U2 snRNPs to the 5' and 3' splice sites of the intron. May both positively and negatively regulate apoptosis by regulating the alternative splicing of several genes involved in this process, including FAS and CASP2/caspase-2. In the case of FAS, promotes exclusion of exon 6 thereby producing a soluble form of FAS that inhibits apoptosis. In the case of CASP2/caspase-2, promotes exclusion of exon 9 thereby producing a catalytically active form of CASP2/Caspase-2 that induces apoptosis. The chain is RNA-binding protein 5 (RBM5) from Homo sapiens (Human).